We begin with the raw amino-acid sequence, 452 residues long: UDP-N-acetylmuramoylalanine--D-glutamate ligase (452 aa).

119–125 (GSNGKTT) lines the ATP pocket.

This sequence belongs to the MurCDEF family.

It localises to the cytoplasm. The catalysed reaction is UDP-N-acetyl-alpha-D-muramoyl-L-alanine + D-glutamate + ATP = UDP-N-acetyl-alpha-D-muramoyl-L-alanyl-D-glutamate + ADP + phosphate + H(+). It participates in cell wall biogenesis; peptidoglycan biosynthesis. Functionally, cell wall formation. Catalyzes the addition of glutamate to the nucleotide precursor UDP-N-acetylmuramoyl-L-alanine (UMA). The polypeptide is UDP-N-acetylmuramoylalanine--D-glutamate ligase (Streptococcus pyogenes serotype M2 (strain MGAS10270)).